The chain runs to 419 residues: tRNA(Met) cytidine acetate ligase (419 aa).

ATP-binding positions include I7–H20, G101, N163, and R188.

It belongs to the TmcAL family.

It is found in the cytoplasm. The catalysed reaction is cytidine(34) in elongator tRNA(Met) + acetate + ATP = N(4)-acetylcytidine(34) in elongator tRNA(Met) + AMP + diphosphate. Catalyzes the formation of N(4)-acetylcytidine (ac(4)C) at the wobble position of elongator tRNA(Met), using acetate and ATP as substrates. First activates an acetate ion to form acetyladenylate (Ac-AMP) and then transfers the acetyl group to tRNA to form ac(4)C34. The chain is tRNA(Met) cytidine acetate ligase from Syntrophotalea carbinolica (strain DSM 2380 / NBRC 103641 / GraBd1) (Pelobacter carbinolicus).